Consider the following 464-residue polypeptide: Dihydrolipoyllysine-residue succinyltransferase component of 2-oxoglutarate dehydrogenase complex 1, mitochondrial (464 aa).

The transit peptide at 1–86 (MMLRAVFRRA…TALQRWVRPF (86 aa)) directs the protein to the mitochondrion. The Lipoyl-binding domain occupies 93 to 168 (VVEAVVPHMG…EPGNKVARIS (76 aa)). Lys-134 is modified (N6-lipoyllysine). The disordered stretch occupies residues 168–242 (STSADAVSHV…DRERRVPMTR (75 aa)). A compositionally biased stretch (basic and acidic residues) spans 196–210 (EKPKVESTKVAEKPK). The span at 211–220 (APSPPPPPPS) shows a compositional bias: pro residues. Residues His-435 and Asp-439 contribute to the active site.

Belongs to the 2-oxoacid dehydrogenase family. Forms a 24-polypeptide structural core with octahedral symmetry. It depends on (R)-lipoate as a cofactor.

It is found in the mitochondrion. It carries out the reaction N(6)-[(R)-dihydrolipoyl]-L-lysyl-[protein] + succinyl-CoA = N(6)-[(R)-S(8)-succinyldihydrolipoyl]-L-lysyl-[protein] + CoA. Its pathway is amino-acid degradation; L-lysine degradation via saccharopine pathway; glutaryl-CoA from L-lysine: step 6/6. In terms of biological role, the 2-oxoglutarate dehydrogenase complex catalyzes the overall conversion of 2-oxoglutarate to succinyl-CoA and CO(2). It contains multiple copies of three enzymatic components: 2-oxoglutarate dehydrogenase (E1), dihydrolipoamide succinyltransferase (E2) and lipoamide dehydrogenase (E3). The chain is Dihydrolipoyllysine-residue succinyltransferase component of 2-oxoglutarate dehydrogenase complex 1, mitochondrial from Arabidopsis thaliana (Mouse-ear cress).